The primary structure comprises 872 residues: DNA mismatch repair protein MutS (872 aa).

602–609 (GPNMSGKS) is an ATP binding site.

It belongs to the DNA mismatch repair MutS family.

Functionally, this protein is involved in the repair of mismatches in DNA. It is possible that it carries out the mismatch recognition step. This protein has a weak ATPase activity. In Staphylococcus aureus (strain MRSA252), this protein is DNA mismatch repair protein MutS.